The primary structure comprises 202 residues: LexA repressor (202 aa).

A DNA-binding region (H-T-H motif) is located at residues 28 to 47 (IREIGDQFGITAKGAYDHLK). Catalysis depends on for autocatalytic cleavage activity residues Ser-126 and Lys-163.

Belongs to the peptidase S24 family. In terms of assembly, homodimer.

The enzyme catalyses Hydrolysis of Ala-|-Gly bond in repressor LexA.. Functionally, represses a number of genes involved in the response to DNA damage (SOS response), including recA and lexA. In the presence of single-stranded DNA, RecA interacts with LexA causing an autocatalytic cleavage which disrupts the DNA-binding part of LexA, leading to derepression of the SOS regulon and eventually DNA repair. This Leptospira biflexa serovar Patoc (strain Patoc 1 / Ames) protein is LexA repressor.